We begin with the raw amino-acid sequence, 238 residues long: Fatty acid metabolism regulator protein (238 aa).

In terms of domain architecture, HTH gntR-type spans Lys6–Phe74. Residues Glu34 to Gln53 constitute a DNA-binding region (H-T-H motif).

Homodimer.

Its subcellular location is the cytoplasm. Multifunctional regulator of fatty acid metabolism. This chain is Fatty acid metabolism regulator protein, found in Shewanella baltica (strain OS223).